Consider the following 243-residue polypeptide: Probable transcriptional regulatory protein BAV2207 (243 aa).

Residues 1-21 form a disordered region; sequence MAGHSKWANIQHRKGRQDAKR.

It belongs to the TACO1 family.

The protein localises to the cytoplasm. This chain is Probable transcriptional regulatory protein BAV2207, found in Bordetella avium (strain 197N).